The chain runs to 216 residues: MTQQITLALSKGRIFEETLPLLAAAGIEVLEDPEKSRKLILPTSRPEVRVVLVRATDVPTYVQYGGADLGVAGKDSLIEHGGQGLFRPLDLKIAKCRVSVAVRADFDYREAVTQGSRLKVATKYTSIARDFFASKGVHVDLIKLYGSMELAPLTGLADAIVDLVSTGNTLKANNLVEVEQIMDISSHLVVNQAALKLKQAPLRRIIDAFASAVPQG.

Belongs to the ATP phosphoribosyltransferase family. Short subfamily. As to quaternary structure, heteromultimer composed of HisG and HisZ subunits.

It localises to the cytoplasm. It catalyses the reaction 1-(5-phospho-beta-D-ribosyl)-ATP + diphosphate = 5-phospho-alpha-D-ribose 1-diphosphate + ATP. Its pathway is amino-acid biosynthesis; L-histidine biosynthesis; L-histidine from 5-phospho-alpha-D-ribose 1-diphosphate: step 1/9. Functionally, catalyzes the condensation of ATP and 5-phosphoribose 1-diphosphate to form N'-(5'-phosphoribosyl)-ATP (PR-ATP). Has a crucial role in the pathway because the rate of histidine biosynthesis seems to be controlled primarily by regulation of HisG enzymatic activity. In Acidovorax ebreus (strain TPSY) (Diaphorobacter sp. (strain TPSY)), this protein is ATP phosphoribosyltransferase.